The sequence spans 641 residues: Transcription termination factor MTERF2, chloroplastic (641 aa).

2 disordered regions span residues 54 to 80 (LKLN…DLDG) and 606 to 641 (FEAG…DLTE). The segment covering 610-641 (LDSEDSQPSDENISDQEIAFSDEAEEEEDLTE) has biased composition (acidic residues).

Belongs to the mTERF family.

The protein resides in the plastid. The protein localises to the chloroplast. Functionally, transcription termination factor involved in processing of plastid transcripts. Essential for embryogenesis. This Arabidopsis thaliana (Mouse-ear cress) protein is Transcription termination factor MTERF2, chloroplastic.